The chain runs to 331 residues: Cytosolic 5'-nucleotidase 3A (331 aa).

D83 acts as the Nucleophile in catalysis. 2 residues coordinate Mg(2+): D83 and D85. D85 functions as the Proton donor in the catalytic mechanism. E130 provides a ligand contact to CMP. N(7)-methyl-GMP contacts are provided by E130 and S151. Residues 198-199 (SA) and K247 each bind substrate. D272 lines the Mg(2+) pocket.

It belongs to the pyrimidine 5'-nucleotidase family.

Its subcellular location is the cytoplasm. The enzyme catalyses N(7)-methyl-GMP + H2O = N(7)-methylguanosine + phosphate. It carries out the reaction a ribonucleoside 5'-phosphate + H2O = a ribonucleoside + phosphate. Its function is as follows. Nucleotidase which shows specific activity towards cytidine monophosphate (CMP) and 7-methylguanosine monophosphate (m(7)GMP). CMP seems to be the preferred substrate. The polypeptide is Cytosolic 5'-nucleotidase 3A (NT5C3A) (Gallus gallus (Chicken)).